The sequence spans 214 residues: Cytochrome b (214 aa).

Helical transmembrane passes span 31-51 (FGSM…FLAI), 75-96 (WIMQ…YIHI), 111-131 (WLSG…GYVL), and 176-196 (FFAL…AHIL). Positions 81 and 95 each coordinate heme b. The heme b site is built by His180 and His194. A ubiquinone is bound at residue His199.

Belongs to the cytochrome b family. The cytochrome bc1 complex contains 3 respiratory subunits (MT-CYB, CYC1 and UQCRFS1), 2 core proteins (UQCRC1 and UQCRC2) and probably 6 low-molecular weight proteins. Heme b serves as cofactor.

It is found in the mitochondrion inner membrane. Its function is as follows. Component of the ubiquinol-cytochrome c reductase complex (complex III or cytochrome b-c1 complex) that is part of the mitochondrial respiratory chain. The b-c1 complex mediates electron transfer from ubiquinol to cytochrome c. Contributes to the generation of a proton gradient across the mitochondrial membrane that is then used for ATP synthesis. The chain is Cytochrome b (MT-CYB) from Bothriechis schlegelii (Eyelash palm pitviper).